The sequence spans 398 residues: F-box/kelch-repeat protein At1g30090 (398 aa).

The region spanning 51 to 98 is the F-box domain; sequence EPLIPGLPDDVALNCLLRVPVQSHVSSKSVCKRWHLLFGTKETFFAKR. Kelch repeat units lie at residues 106–152, 159–207, 209–255, 257–304, and 305–346; these read PWLF…FRSV, TMFV…VIDG, IYAA…VLNG, LLVT…IYDR, and LFIV…AVNC.

The protein is F-box/kelch-repeat protein At1g30090 of Arabidopsis thaliana (Mouse-ear cress).